The sequence spans 469 residues: Putative dipeptidase SSP1012 (469 aa).

Histidine 84 lines the Zn(2+) pocket. The active site involves aspartate 86. Residue aspartate 115 participates in Zn(2+) binding. Glutamate 149 functions as the Proton acceptor in the catalytic mechanism. Zn(2+) is bound by residues glutamate 150, aspartate 173, and histidine 440.

The protein belongs to the peptidase M20A family. Zn(2+) serves as cofactor.

The sequence is that of Putative dipeptidase SSP1012 from Staphylococcus saprophyticus subsp. saprophyticus (strain ATCC 15305 / DSM 20229 / NCIMB 8711 / NCTC 7292 / S-41).